The following is a 433-amino-acid chain: Homeobox protein Hox-D3 (433 aa).

3 disordered regions span residues 44-198 (STPH…SKRV), 258-280 (GILH…AAGH), and 401-433 (HHGP…LTHL). A compositionally biased stretch (polar residues) spans 58 to 74 (SLDSDYPSSACSIQSSA). Residues 97 to 106 (NSQGGGGGNQ) show a composition bias toward gly residues. Residues 116–132 (PPQPPPPPPPTLPPSSP) are compositionally biased toward pro residues. Positions 146–159 (GGLSASSSSSTISK) are enriched in low complexity. Residues 161–166 (IFPWMK) carry the Antp-type hexapeptide motif. Residues 171–183 (NSKQKNSCATSGE) are compositionally biased toward polar residues. Positions 195 to 254 (SKRVRTAYTSAQLVELEKEFHFNRYLCRPRRVEMANLLNLTERQIKIWFQNRRMKYKKDQ) form a DNA-binding region, homeobox.

Belongs to the Antp homeobox family. Detected in adult kidney, but not in other adult tissues tested.

The protein localises to the nucleus. In terms of biological role, sequence-specific transcription factor which is part of a developmental regulatory system that provides cells with specific positional identities on the anterior-posterior axis. The protein is Homeobox protein Hox-D3 (Hoxd3) of Mus musculus (Mouse).